Reading from the N-terminus, the 76-residue chain is Probable small nuclear ribonucleoprotein G (76 aa).

The Sm domain occupies 4-76 (AHPPEVKKYM…IVMVEALDRV (73 aa)).

The protein belongs to the snRNP Sm proteins family. In terms of assembly, interacts with the SMN complex. Core component of the spliceosomal U1, U2, U4 and U5 small nuclear ribonucleoproteins (snRNPs), the building blocks of the spliceosome. Most spliceosomal snRNPs contain a common set of Sm proteins, SNRPB, SNRPD1, SNRPD2, SNRPD3, SNRPE, SNRPF and SNRPG that assemble in a heptameric protein ring on the Sm site of the small nuclear RNA to form the core snRNP. Component of the U1 snRNP. Component of the U4/U6-U5 tri-snRNP complex. Component of the U7 snRNP complex. Component of the U11/U12 snRNPs that are part of the U12-type spliceosome.

Its subcellular location is the cytoplasm. The protein resides in the cytosol. The protein localises to the nucleus. Its function is as follows. Plays a role in pre-mRNA splicing as a core component of the spliceosomal U1, U2, U4 and U5 small nuclear ribonucleoproteins (snRNPs), the building blocks of the spliceosome. Component of both the pre-catalytic spliceosome B complex and activated spliceosome C complexes. Is also a component of the minor U12 spliceosome. This chain is Probable small nuclear ribonucleoprotein G, found in Drosophila melanogaster (Fruit fly).